Here is a 102-residue protein sequence, read N- to C-terminus: Acid shock protein (102 aa).

Positions 1 to 21 are cleaved as a signal peptide; sequence MKKVLALVVAAAMGLSSAAFA. Residues 22–41 are compositionally biased toward low complexity; the sequence is AETATTPAPTATTTKAAPAK. A propeptide spanning residues 22–58 is cleaved from the precursor; sequence AETATTPAPTATTTKAAPAKTTHHKKQHKAAPAQKAQ. The interval 22–102 is disordered; sequence AETATTPAPT…PAKPAAQPAA (81 aa). A compositionally biased stretch (basic residues) spans 80–90; that stretch reads AAKKHAGKHGH. Positions 91 to 102 are enriched in low complexity; the sequence is QQPAKPAAQPAA.

This sequence belongs to the Asr family. Post-translationally, proteolytic processing gives rise to the active protein.

The protein resides in the periplasm. Its function is as follows. Required for growth and/or survival at acidic conditions. The sequence is that of Acid shock protein from Shigella flexneri.